The chain runs to 732 residues: Translation initiation factor eIF2B subunit epsilon (732 aa).

Residues 559–726 enclose the W2 domain; the sequence is GEEEEDFGVE…QEADEEDSDE (168 aa).

Belongs to the eIF-2B gamma/epsilon subunits family. In terms of assembly, component of the translation initiation factor 2B (eIF2B) complex which is a heterodecamer of two sets of five different subunits: alpha, beta, gamma, delta and epsilon. Subunits alpha, beta and delta comprise a regulatory subcomplex and subunits epsilon and gamma comprise a catalytic subcomplex. Within the complex, the hexameric regulatory complex resides at the center, with the two heterodimeric catalytic subcomplexes bound on opposite sides.

It is found in the cytoplasm. Its subcellular location is the cytosol. Acts as a component of the translation initiation factor 2B (eIF2B) complex, which catalyzes the exchange of GDP for GTP on the eukaryotic initiation factor 2 (eIF2) complex gamma subunit. Its guanine nucleotide exchange factor activity is repressed when bound to eIF2 complex phosphorylated on the alpha subunit, thereby limiting the amount of methionyl-initiator methionine tRNA available to the ribosome and consequently global translation is repressed. This is Translation initiation factor eIF2B subunit epsilon (GCD6) from Candida albicans (strain SC5314 / ATCC MYA-2876) (Yeast).